We begin with the raw amino-acid sequence, 105 residues long: Thioredoxin (105 aa).

The 105-residue stretch at 1–105 folds into the Thioredoxin domain; that stretch reads VQVISSYDQF…LQAAITQHSA (105 aa). Catalysis depends on nucleophile residues Cys29 and Cys32. Residues Cys29 and Cys32 are joined by a disulfide bond.

It belongs to the thioredoxin family. In terms of assembly, monomer.

Participates in various redox reactions through the reversible oxidation of its active center dithiol to a disulfide and catalyzes dithiol-disulfide exchange reactions. The sequence is that of Thioredoxin from Malassezia sympodialis (Atopic eczema-associated yeast).